Consider the following 343-residue polypeptide: 3-dehydroquinate synthase (343 aa).

Residues 61-66 (SGEKYK), 95-99 (GVISD), 119-120 (TT), Lys-132, Lys-141, and 159-162 (FLKT) each bind NAD(+). Glu-174, His-231, and His-248 together coordinate Zn(2+).

It belongs to the sugar phosphate cyclases superfamily. Dehydroquinate synthase family. It depends on Co(2+) as a cofactor. Requires Zn(2+) as cofactor. NAD(+) is required as a cofactor.

Its subcellular location is the cytoplasm. It carries out the reaction 7-phospho-2-dehydro-3-deoxy-D-arabino-heptonate = 3-dehydroquinate + phosphate. It functions in the pathway metabolic intermediate biosynthesis; chorismate biosynthesis; chorismate from D-erythrose 4-phosphate and phosphoenolpyruvate: step 2/7. Catalyzes the conversion of 3-deoxy-D-arabino-heptulosonate 7-phosphate (DAHP) to dehydroquinate (DHQ). The sequence is that of 3-dehydroquinate synthase from Helicobacter pylori (strain G27).